A 119-amino-acid chain; its full sequence is MICOS complex subunit MIC13 (119 aa).

Topologically, residues 1-7 are mitochondrial matrix; that stretch reads MVARVWS. A helical membrane pass occupies residues 8 to 26; that stretch reads LMRFLIKGSVAGGAVYLVY. Residues 27–119 are Mitochondrial intermembrane-facing; sequence DQELLGPSDK…GWEYLKEHSK (93 aa).

This sequence belongs to the MICOS complex subunit Mic13 family. Component of the mitochondrial contact site and cristae organizing system (MICOS) complex, composed of at least MICOS10/MIC10, CHCHD3/MIC19, CHCHD6/MIC25, APOO/MIC26, MICOS13/MIC13, APOOL/MIC27 and IMMT/MIC60. The MICOS complex associates with mitochondrial outer membrane proteins SAMM50, MTX1 and MTX2 (together described as components of the mitochondrial outer membrane sorting assembly machinery (SAM) complex) and DNAJC11, mitochondrial inner membrane protein TMEM11 and with HSPA9. The MICOS and SAM complexes together with DNAJC11 are part of a large protein complex spanning both membranes termed the mitochondrial intermembrane space bridging (MIB) complex.

It is found in the mitochondrion inner membrane. Component of the MICOS complex, a large protein complex of the mitochondrial inner membrane that plays crucial roles in the maintenance of crista junctions, inner membrane architecture, and formation of contact sites to the outer membrane. Constituent of mature MICOS complex, it is required for the formation of cristae junction (CJ) and maintenance of cristae morphology. Required for the incorporation of MICOS10/MIC10 into the MICOS complex. In Mus musculus (Mouse), this protein is MICOS complex subunit MIC13 (Micos13).